The chain runs to 611 residues: Chaperone protein DnaK (611 aa).

At Thr-173 the chain carries Phosphothreonine; by autocatalysis. Over residues 579–592 the composition is skewed to low complexity; that stretch reads AAGQAEGAQGAQDA. The tract at residues 579–598 is disordered; sequence AAGQAEGAQGAQDAGAKKDN.

The protein belongs to the heat shock protein 70 family.

Functionally, acts as a chaperone. This is Chaperone protein DnaK from Bacillus cereus (strain ATCC 10987 / NRS 248).